The following is a 167-amino-acid chain: Mannose-specific lectin (167 aa).

The first 24 residues, 1 to 24 (MAFSISSTMIFLLSLALFSTLVSA), serve as a signal peptide directing secretion. A Bulb-type lectin domain is found at 25 to 138 (DNHLLPGERL…PIFATGTNRF (114 aa)). Cys-53 and Cys-76 are joined by a disulfide.

In terms of assembly, homotetramer. In terms of tissue distribution, expressed in the pseudobulb, with highest levels of expression in the non-swollen internode (at protein level).

It localises to the secreted. In terms of biological role, mannose-specific lectin. Shows agglutinating activity towards chicken erythrocytes. Has antifungal activity against A.alternata and Collectotrichum species. The protein is Mannose-specific lectin of Dendrobium findlayanum (Findlay's orchid).